We begin with the raw amino-acid sequence, 76 residues long: Small ribosomal subunit protein bS18 (76 aa).

Belongs to the bacterial ribosomal protein bS18 family. Part of the 30S ribosomal subunit. Forms a tight heterodimer with protein bS6.

Functionally, binds as a heterodimer with protein bS6 to the central domain of the 16S rRNA, where it helps stabilize the platform of the 30S subunit. The chain is Small ribosomal subunit protein bS18 from Alkaliphilus metalliredigens (strain QYMF).